A 130-amino-acid polypeptide reads, in one-letter code: Small ribosomal subunit protein uS9 (130 aa).

The protein belongs to the universal ribosomal protein uS9 family.

This chain is Small ribosomal subunit protein uS9, found in Halalkalibacterium halodurans (strain ATCC BAA-125 / DSM 18197 / FERM 7344 / JCM 9153 / C-125) (Bacillus halodurans).